The sequence spans 242 residues: Prosalusin (242 aa).

Residues 1–26 (MAAATRGCRPWGSLLGLLGLVSAAAA) form the signal peptide. Positions 27-189 (AWDLASLRCT…SSWVVYGTNY (163 aa)) are excised as a propeptide. 93 to 100 (GWTGTGKS) serves as a coordination point for ATP. Asparagine 149 carries an N-linked (GlcNAc...) asparagine glycan. The interval 210–242 (PPRRSGALPPAPAAPRPALRAQRAGPAGPGAKG) is disordered. Residues 225 to 235 (RPALRAQRAGP) show a composition bias toward low complexity. Lysine 241 carries the post-translational modification Lysine amide.

It belongs to the ClpA/ClpB family. Torsin subfamily. In terms of processing, amidation of salusin-alpha(29-Gly) by peptidylglycine alpha-amidating monooxygenase, PAM, converts Lys-241-Gly-242 to Lys-241-NH2 and gives raise to salusin-alpha. As to expression, isoform 4 is ubiquitously expressed, with high level in vascular endothelial cells and vascular smooth muscle cells.

It is found in the secreted. Functionally, salusins -alpha and -beta may be endocrine and/or paracrine factors able to increase intracellular calcium concentrations and induce cell mitogenesis. Salusins may also be potent hypotensive peptides. The polypeptide is Prosalusin (TOR2A) (Homo sapiens (Human)).